Here is a 144-residue protein sequence, read N- to C-terminus: Small ribosomal subunit protein bS6 (144 aa).

Residues 99-144 (KASPLAPCEEKGEEGKAEDAADELTTFGMADDDDLGDDDDTVEAGI) are disordered. A compositionally biased stretch (basic and acidic residues) spans 106-117 (CEEKGEEGKAED). Acidic residues predominate over residues 128–144 (ADDDDLGDDDDTVEAGI).

It belongs to the bacterial ribosomal protein bS6 family.

Functionally, binds together with bS18 to 16S ribosomal RNA. The chain is Small ribosomal subunit protein bS6 from Magnetococcus marinus (strain ATCC BAA-1437 / JCM 17883 / MC-1).